The sequence spans 924 residues: MAGKARVHELAKELGVTSKEVLARLNEQGEFVKSASSTVEAPVARRLRESFGGIKPAADKGAEQVATKAQAKRLGESLDQTLDRALDKAVAGNGATTAAPVQVDHSAAVVPIVAGEGPSTAHREELAPPAGQPSEQPGVPLPGQQGTPAAPHPGHPGMPTGPHPGPAPKPGGRPPRVGNNPFSSAQSVARPIPRPPAPRPSASPSSMSPRPGGAVGGGGPRPPRTGVPRPGGGRPGAPVGGRSDAGGGNYRGGGVGALPGGGSGGFRGRPGGGGHGGGGRPGQRGGAAGAFGRPGGAPRRGRKSKRQKRQEYDSMQAPVVGGVRLPHGNGETIRLARGASLSDFAEKIDANPAALVQALFNLGEMVTATQSVGDETLELLGSEMNYNVQVVSPEDEDRELLEPFDLTYGEDQGDEDELQVRPPVVTVMGHVDHGKTRLLDTIRKANVREAEAGGITQHIGAYQVGVDLDGSERLITFIDTPGHEAFTAMRARGAKATDIAILVVAADDGVMPQTVEAINHAQAADVPIVVAVNKIDKEGADPAKIRGQLTEYGLVAEDFGGDTMFIDISAKVGTNIEALLEAVLLTADAALDLRANSGMEAQGVAIEAHLDRGRGPVATVLVQRGTLRIGDSVVAGDAYGRVRRMVDEHGVDIEAALPSSPVQVIGFTSVPGAGDNFLVVDEDRIARQIADRRSARKRNALAARSRKRISLEDLDSALKETSQLNLILKGDNAGTVEALEEALMGIQVDDEVALRVIDRGVGGITETNVNLASASDAIIIGFNVRAEGKATELASREGVEIRYYLVIYQAIDDIEKALRGMLKPIYEENQLGRAEIRALFRSSKVGIIAGCIISSGVVRRNAKVRLLRDNIVVTDNLTVTSLRREKDDVTEVREGFECGMTLGYSDIKEGDVIESYELVEKQRA.

Positions 118 to 325 (PSTAHREELA…QAPVVGGVRL (208 aa)) are disordered. Pro residues-rich tracts occupy residues 150 to 173 (APHPGHPGMPTGPHPGPAPKPGGR) and 192 to 201 (IPRPPAPRPS). A compositionally biased stretch (low complexity) spans 202-212 (ASPSSMSPRPG). A compositionally biased stretch (gly residues) spans 229-295 (RPGGGRPGAP…GAAGAFGRPG (67 aa)). Residues 299–308 (RRGRKSKRQK) show a composition bias toward basic residues. A tr-type G domain is found at 420–591 (VRPPVVTVMG…AVLLTADAAL (172 aa)). Residues 429 to 436 (GHVDHGKT) are G1. Position 429–436 (429–436 (GHVDHGKT)) interacts with GTP. A G2 region spans residues 454-458 (GITQH). A G3 region spans residues 479–482 (DTPG). Residues 479–483 (DTPGH) and 533–536 (NKID) contribute to the GTP site. Positions 533 to 536 (NKID) are G4. A G5 region spans residues 569-571 (SAK).

The protein belongs to the TRAFAC class translation factor GTPase superfamily. Classic translation factor GTPase family. IF-2 subfamily.

It localises to the cytoplasm. One of the essential components for the initiation of protein synthesis. Protects formylmethionyl-tRNA from spontaneous hydrolysis and promotes its binding to the 30S ribosomal subunits. Also involved in the hydrolysis of GTP during the formation of the 70S ribosomal complex. The polypeptide is Translation initiation factor IF-2 (Mycobacterium leprae (strain Br4923)).